We begin with the raw amino-acid sequence, 294 residues long: Farnesyl diphosphate synthase (294 aa).

3 residues coordinate isopentenyl diphosphate: K45, R48, and H77. Residues D84 and D90 each contribute to the Mg(2+) site. (2E)-geranyl diphosphate is bound at residue R95. R96 provides a ligand contact to isopentenyl diphosphate. K181, T182, and Q220 together coordinate (2E)-geranyl diphosphate.

Belongs to the FPP/GGPP synthase family. Mg(2+) is required as a cofactor.

It localises to the cytoplasm. The enzyme catalyses isopentenyl diphosphate + (2E)-geranyl diphosphate = (2E,6E)-farnesyl diphosphate + diphosphate. The chain is Farnesyl diphosphate synthase (ispA) from Buchnera aphidicola subsp. Schizaphis graminum (strain Sg).